A 388-amino-acid chain; its full sequence is Queuine tRNA-ribosyltransferase (388 aa).

Residue D91 is the Proton acceptor of the active site. Substrate-binding positions include 91-95 (DSGGY), D145, Q190, and G217. The interval 248-254 (GVGAPED) is RNA binding. The active-site Nucleophile is D267. Residues 272-276 (TRLAR) form an RNA binding; important for wobble base 34 recognition region. Zn(2+) contacts are provided by C305, C307, C310, and H336.

The protein belongs to the queuine tRNA-ribosyltransferase family. As to quaternary structure, homodimer. Within each dimer, one monomer is responsible for RNA recognition and catalysis, while the other monomer binds to the replacement base PreQ1. The cofactor is Zn(2+).

The catalysed reaction is 7-aminomethyl-7-carbaguanine + guanosine(34) in tRNA = 7-aminomethyl-7-carbaguanosine(34) in tRNA + guanine. Its pathway is tRNA modification; tRNA-queuosine biosynthesis. Its function is as follows. Catalyzes the base-exchange of a guanine (G) residue with the queuine precursor 7-aminomethyl-7-deazaguanine (PreQ1) at position 34 (anticodon wobble position) in tRNAs with GU(N) anticodons (tRNA-Asp, -Asn, -His and -Tyr). Catalysis occurs through a double-displacement mechanism. The nucleophile active site attacks the C1' of nucleotide 34 to detach the guanine base from the RNA, forming a covalent enzyme-RNA intermediate. The proton acceptor active site deprotonates the incoming PreQ1, allowing a nucleophilic attack on the C1' of the ribose to form the product. After dissociation, two additional enzymatic reactions on the tRNA convert PreQ1 to queuine (Q), resulting in the hypermodified nucleoside queuosine (7-(((4,5-cis-dihydroxy-2-cyclopenten-1-yl)amino)methyl)-7-deazaguanosine). This chain is Queuine tRNA-ribosyltransferase, found in Dictyoglomus turgidum (strain DSM 6724 / Z-1310).